The primary structure comprises 138 residues: Basic phospholipase A2 RV-4 (138 aa).

Residues 1 to 16 (MRTLWIVAVCLIGVEG) form the signal peptide. 7 cysteine pairs are disulfide-bonded: cysteine 42-cysteine 131, cysteine 44-cysteine 60, cysteine 59-cysteine 111, cysteine 65-cysteine 138, cysteine 66-cysteine 104, cysteine 73-cysteine 97, and cysteine 91-cysteine 102. Ca(2+)-binding residues include tyrosine 43, glycine 45, and glycine 47. The active site involves histidine 63. Ca(2+) is bound at residue aspartate 64. The active site involves aspartate 105.

This sequence belongs to the phospholipase A2 family. Group II subfamily. D49 sub-subfamily. As to quaternary structure, heterodimer of a weakly toxic basic protein having phospholipase A2 activity (RV-4) and a non-toxic acidic protein which inhibits its enzymatic activity but potentiates its lethal potency and neurotoxicity (RV-7). Requires Ca(2+) as cofactor. Expressed by the venom gland.

The protein localises to the secreted. The catalysed reaction is a 1,2-diacyl-sn-glycero-3-phosphocholine + H2O = a 1-acyl-sn-glycero-3-phosphocholine + a fatty acid + H(+). Functionally, heterodimer RV-4/RV-7: acts as a presynaptic neurotoxin. Its function is as follows. Monomer: snake venom phospholipase A2 (PLA2) that acts as a presynaptic neurotoxin. PLA2 catalyzes the calcium-dependent hydrolysis of the 2-acyl groups in 3-sn-phosphoglycerides. The polypeptide is Basic phospholipase A2 RV-4 (Daboia siamensis (Eastern Russel's viper)).